Here is a 287-residue protein sequence, read N- to C-terminus: 3-methyl-2-oxobutanoate hydroxymethyltransferase (287 aa).

Residues D67 and D106 each coordinate Mg(2+). 3-methyl-2-oxobutanoate contacts are provided by residues 67 to 68 (DS), D106, and K136. E138 serves as a coordination point for Mg(2+). E204 serves as the catalytic Proton acceptor.

This sequence belongs to the PanB family. As to quaternary structure, homodecamer; pentamer of dimers. Requires Mg(2+) as cofactor.

It is found in the cytoplasm. It carries out the reaction 3-methyl-2-oxobutanoate + (6R)-5,10-methylene-5,6,7,8-tetrahydrofolate + H2O = 2-dehydropantoate + (6S)-5,6,7,8-tetrahydrofolate. The protein operates within cofactor biosynthesis; (R)-pantothenate biosynthesis; (R)-pantoate from 3-methyl-2-oxobutanoate: step 1/2. In terms of biological role, catalyzes the reversible reaction in which hydroxymethyl group from 5,10-methylenetetrahydrofolate is transferred onto alpha-ketoisovalerate to form ketopantoate. This chain is 3-methyl-2-oxobutanoate hydroxymethyltransferase, found in Streptomyces avermitilis (strain ATCC 31267 / DSM 46492 / JCM 5070 / NBRC 14893 / NCIMB 12804 / NRRL 8165 / MA-4680).